The primary structure comprises 72 residues: uncharacterized protein (72 aa).

Its subcellular location is the host cytoplasm. This is an uncharacterized protein from Enterobacteriaceae (Bacteriophage Mu).